The following is a 148-amino-acid chain: Single-stranded DNA-binding protein, mitochondrial (148 aa).

The transit peptide at 1-16 (MFRRPALQVLRQFVRH) directs the protein to the mitochondrion. Residues 30–141 (LNRVQLLGRV…IIADNIVFLS (112 aa)) form the SSB domain. 2 positions are modified to phosphoserine: serine 67 and serine 79. Lysine 113 carries the post-translational modification N6-acetyllysine. Lysine 122 bears the N6-succinyllysine mark.

As to quaternary structure, homotetramer. Interacts with MPG/AAG, through inhibition of its glycosylase activity it potentially prevents formation of DNA breaks in ssDNA, ensuring that base removal primarily occurs in dsDNA. Interacts with POLDIP2. Interacts with PRIMPOL.

The protein resides in the mitochondrion. It localises to the mitochondrion matrix. The protein localises to the mitochondrion nucleoid. Functionally, binds preferentially and cooperatively to pyrimidine rich single-stranded DNA (ss-DNA). In vitro, required to maintain the copy number of mitochondrial DNA (mtDNA) and plays a crucial role during mtDNA replication by stimulating the activity of the replisome components POLG and TWNK at the replication fork. Promotes the activity of the gamma complex polymerase POLG, largely by organizing the template DNA and eliminating secondary structures to favor ss-DNA conformations that facilitate POLG activity. In addition it is able to promote the 5'-3' unwinding activity of the mtDNA helicase TWNK. May also function in mtDNA repair. In Oryctolagus cuniculus (Rabbit), this protein is Single-stranded DNA-binding protein, mitochondrial (SSBP1).